The chain runs to 232 residues: Ureidoacrylate amidohydrolase RutB (232 aa).

Catalysis depends on D26, which acts as the Proton acceptor. Residue K135 is part of the active site. C168 (nucleophile) is an active-site residue.

Belongs to the isochorismatase family. RutB subfamily.

It carries out the reaction (Z)-3-ureidoacrylate + H2O + H(+) = (Z)-3-aminoacrylate + NH4(+) + CO2. The enzyme catalyses (Z)-3-ureidoacrylate + H2O = (Z)-3-aminoacrylate + carbamate + H(+). The catalysed reaction is (Z)-2-methylureidoacrylate + H2O + H(+) = (Z)-2-methylaminoacrylate + NH4(+) + CO2. Hydrolyzes ureidoacrylate to form aminoacrylate and carbamate. The carbamate hydrolyzes spontaneously, thereby releasing one of the nitrogen atoms of the pyrimidine ring as ammonia and one of its carbon atoms as CO2. The protein is Ureidoacrylate amidohydrolase RutB of Cronobacter turicensis (strain DSM 18703 / CCUG 55852 / LMG 23827 / z3032).